Here is a 164-residue protein sequence, read N- to C-terminus: MD-2-related lipid-recognition protein 3 (164 aa).

A signal peptide spans 1–24 (MAMSHVQPMLLLLVSLFFLPALRG).

As to quaternary structure, interacts with RUB1/NEDD8. In terms of processing, neddylated. Ubiquitinated.

Its subcellular location is the vacuole. It is found in the endoplasmic reticulum. May be involved in herbivory-mediated responses. May play a role in herbivory-associated molecular pattern (HAMP) recognition. May function is jasmonate (JA) signaling in response to HAMP. May play a role in defense response against the pathogens Altenaria brassicicola and Pseudomonas syringae. The protein is MD-2-related lipid-recognition protein 3 of Arabidopsis thaliana (Mouse-ear cress).